The sequence spans 166 residues: Endoribonuclease YbeY (166 aa).

Zn(2+)-binding residues include H136, H140, and H146.

This sequence belongs to the endoribonuclease YbeY family. Zn(2+) serves as cofactor.

It localises to the cytoplasm. Its function is as follows. Single strand-specific metallo-endoribonuclease involved in late-stage 70S ribosome quality control and in maturation of the 3' terminus of the 16S rRNA. The protein is Endoribonuclease YbeY of Synechococcus sp. (strain CC9605).